The sequence spans 547 residues: Cytochrome P450 monooxygenase 81 (547 aa).

The next 2 membrane-spanning stretches (helical) occupy residues 6–23 (IPTQLGIAGAVAVLLFLL) and 106–124 (AFFAMTYLLFGPGLLATAG). Position 483 (Cys483) interacts with heme. N-linked (GlcNAc...) asparagine glycosylation is found at Asn503 and Asn516.

The protein belongs to the cytochrome P450 family. Heme is required as a cofactor.

It localises to the membrane. Its pathway is secondary metabolite biosynthesis. Its function is as follows. Cytochrome P450 monooxygenase that is able to use dehydroabietic acid as a substrate for oxidation. In Postia placenta (strain ATCC 44394 / Madison 698-R) (Brown rot fungus), this protein is Cytochrome P450 monooxygenase 81.